Consider the following 202-residue polypeptide: Glycerol-3-phosphate acyltransferase (202 aa).

6 helical membrane-spanning segments follow: residues 3-23 (NLIIYAFIYLLGSIPFGLILA), 61-81 (IATIILDFAKAAIPLLILKFL), 87-107 (LLWSVAVLAIFGHCFSIYLLF), 118-138 (GAMIVLLPLEVLTAFIVWVVI), 144-164 (ISSLASLAALLAFVISSFIFN), and 167-187 (LEIHTHAPVFIIAFIIIYKHL).

The protein belongs to the PlsY family. Probably interacts with PlsX.

It localises to the cell inner membrane. It catalyses the reaction an acyl phosphate + sn-glycerol 3-phosphate = a 1-acyl-sn-glycero-3-phosphate + phosphate. It participates in lipid metabolism; phospholipid metabolism. Its function is as follows. Catalyzes the transfer of an acyl group from acyl-phosphate (acyl-PO(4)) to glycerol-3-phosphate (G3P) to form lysophosphatidic acid (LPA). This enzyme utilizes acyl-phosphate as fatty acyl donor, but not acyl-CoA or acyl-ACP. The sequence is that of Glycerol-3-phosphate acyltransferase from Campylobacter jejuni subsp. jejuni serotype O:23/36 (strain 81-176).